The following is a 301-amino-acid chain: Small ribosomal subunit protein uS2 (301 aa).

Residues 282 to 301 (VRKQPVSENENVEAAAAEQK) form a disordered region. Positions 289–301 (ENENVEAAAAEQK) are enriched in low complexity.

This sequence belongs to the universal ribosomal protein uS2 family.

In Koribacter versatilis (strain Ellin345), this protein is Small ribosomal subunit protein uS2.